A 154-amino-acid chain; its full sequence is Myoglobin (154 aa).

Residues 2-148 (GLSDGEWQLV…FRNDMAAQYK (147 aa)) form the Globin domain. Phosphoserine is present on S4. H65 lines the nitrite pocket. An O2-binding site is contributed by H65. T68 is subject to Phosphothreonine. H94 contacts heme b.

This sequence belongs to the globin family. As to quaternary structure, monomeric.

The protein localises to the cytoplasm. It localises to the sarcoplasm. It carries out the reaction Fe(III)-heme b-[protein] + nitric oxide + H2O = Fe(II)-heme b-[protein] + nitrite + 2 H(+). It catalyses the reaction H2O2 + AH2 = A + 2 H2O. Functionally, monomeric heme protein which primary function is to store oxygen and facilitate its diffusion within muscle tissues. Reversibly binds oxygen through a pentacoordinated heme iron and enables its timely and efficient release as needed during periods of heightened demand. Depending on the oxidative conditions of tissues and cells, and in addition to its ability to bind oxygen, it also has a nitrite reductase activity whereby it regulates the production of bioactive nitric oxide. Under stress conditions, like hypoxia and anoxia, it also protects cells against reactive oxygen species thanks to its pseudoperoxidase activity. The protein is Myoglobin (MB) of Bos mutus grunniens (Wild yak).